The following is a 320-amino-acid chain: o-succinylbenzoate synthase (320 aa).

Residue Lys133 is the Proton donor of the active site. Residues Asp161, Glu190, and Asp213 each contribute to the Mg(2+) site. The active-site Proton acceptor is Lys235.

It belongs to the mandelate racemase/muconate lactonizing enzyme family. MenC type 1 subfamily. A divalent metal cation serves as cofactor.

The enzyme catalyses (1R,6R)-6-hydroxy-2-succinyl-cyclohexa-2,4-diene-1-carboxylate = 2-succinylbenzoate + H2O. It participates in quinol/quinone metabolism; 1,4-dihydroxy-2-naphthoate biosynthesis; 1,4-dihydroxy-2-naphthoate from chorismate: step 4/7. Its pathway is quinol/quinone metabolism; menaquinone biosynthesis. Converts 2-succinyl-6-hydroxy-2,4-cyclohexadiene-1-carboxylate (SHCHC) to 2-succinylbenzoate (OSB). This Salmonella dublin (strain CT_02021853) protein is o-succinylbenzoate synthase.